The sequence spans 1070 residues: Alpha-glucosidase (1070 aa).

Positions 1-35 (MRSIKAASLTPLLAALFTTLSSTLALPSSVWEHQL) are cleaved as a signal peptide. 9 N-linked (GlcNAc...) asparagine glycosylation sites follow: asparagine 48, asparagine 99, asparagine 144, asparagine 161, asparagine 208, asparagine 384, asparagine 458, asparagine 480, and asparagine 513. Aspartate 526 functions as the Nucleophile in the catalytic mechanism. Residue glutamate 529 is part of the active site. N-linked (GlcNAc...) asparagine glycans are attached at residues asparagine 544, asparagine 566, asparagine 574, asparagine 578, and asparagine 635. Residue aspartate 730 is the Proton donor of the active site. Asparagine 818, asparagine 885, asparagine 916, asparagine 983, asparagine 992, asparagine 996, asparagine 1008, asparagine 1029, asparagine 1043, and asparagine 1052 each carry an N-linked (GlcNAc...) asparagine glycan.

Belongs to the glycosyl hydrolase 31 family.

The catalysed reaction is Hydrolysis of terminal, non-reducing (1-&gt;4)-linked alpha-D-glucose residues with release of alpha-D-glucose.. Its function is as follows. Hydrolyzes a broad range of alpha-D-linked glucopyranosides, including maltose (alpha-1,4), sucrose (alpha-1,2), isomaltose (alpha-1,6) and turanose (alpha-1,3). The chain is Alpha-glucosidase from Candida tsukubaensis (Yeast).